A 688-amino-acid polypeptide reads, in one-letter code: Methionine--tRNA ligase (688 aa).

The 'HIGH' region signature appears at 13 to 23 (PYANGNFHIGH). Zn(2+) contacts are provided by Cys144, Cys147, Cys157, and Cys160. Positions 342 to 346 (KMSKS) match the 'KMSKS' region motif. Position 345 (Lys345) interacts with ATP. The tRNA-binding domain maps to 582–688 (DFAKVDLRIA…PGAQPGMRIH (107 aa)).

Belongs to the class-I aminoacyl-tRNA synthetase family. MetG type 1 subfamily. In terms of assembly, homodimer. It depends on Zn(2+) as a cofactor.

It is found in the cytoplasm. It carries out the reaction tRNA(Met) + L-methionine + ATP = L-methionyl-tRNA(Met) + AMP + diphosphate. In terms of biological role, is required not only for elongation of protein synthesis but also for the initiation of all mRNA translation through initiator tRNA(fMet) aminoacylation. The protein is Methionine--tRNA ligase of Acidovorax sp. (strain JS42).